The sequence spans 745 residues: Phosphoribosylformylglycinamidine synthase subunit PurL (745 aa).

His-50 is a catalytic residue. Tyr-53 and Lys-92 together coordinate ATP. Glu-94 contacts Mg(2+). Residues 95 to 98 (SHNH) and Arg-117 contribute to the substrate site. His-96 acts as the Proton acceptor in catalysis. Mg(2+) is bound at residue Asp-118. Position 241 (Gln-241) interacts with substrate. Asp-269 serves as a coordination point for Mg(2+). 313–315 (ESQ) contributes to the substrate binding site. Asp-495 and Gly-532 together coordinate ATP. Residue Asn-533 coordinates Mg(2+). Ser-535 provides a ligand contact to substrate.

Belongs to the FGAMS family. Monomer. Part of the FGAM synthase complex composed of 1 PurL, 1 PurQ and 2 PurS subunits.

It is found in the cytoplasm. The enzyme catalyses N(2)-formyl-N(1)-(5-phospho-beta-D-ribosyl)glycinamide + L-glutamine + ATP + H2O = 2-formamido-N(1)-(5-O-phospho-beta-D-ribosyl)acetamidine + L-glutamate + ADP + phosphate + H(+). Its pathway is purine metabolism; IMP biosynthesis via de novo pathway; 5-amino-1-(5-phospho-D-ribosyl)imidazole from N(2)-formyl-N(1)-(5-phospho-D-ribosyl)glycinamide: step 1/2. Functionally, part of the phosphoribosylformylglycinamidine synthase complex involved in the purines biosynthetic pathway. Catalyzes the ATP-dependent conversion of formylglycinamide ribonucleotide (FGAR) and glutamine to yield formylglycinamidine ribonucleotide (FGAM) and glutamate. The FGAM synthase complex is composed of three subunits. PurQ produces an ammonia molecule by converting glutamine to glutamate. PurL transfers the ammonia molecule to FGAR to form FGAM in an ATP-dependent manner. PurS interacts with PurQ and PurL and is thought to assist in the transfer of the ammonia molecule from PurQ to PurL. In Allorhizobium ampelinum (strain ATCC BAA-846 / DSM 112012 / S4) (Agrobacterium vitis (strain S4)), this protein is Phosphoribosylformylglycinamidine synthase subunit PurL.